Reading from the N-terminus, the 132-residue chain is DNA-directed RNA polymerase subunit omega (132 aa).

It belongs to the RNA polymerase subunit omega family. As to quaternary structure, the RNAP catalytic core consists of 2 alpha, 1 beta, 1 beta' and 1 omega subunit. When a sigma factor is associated with the core the holoenzyme is formed, which can initiate transcription.

The catalysed reaction is RNA(n) + a ribonucleoside 5'-triphosphate = RNA(n+1) + diphosphate. Promotes RNA polymerase assembly. Latches the N- and C-terminal regions of the beta' subunit thereby facilitating its interaction with the beta and alpha subunits. The protein is DNA-directed RNA polymerase subunit omega of Bartonella quintana (strain Toulouse) (Rochalimaea quintana).